The sequence spans 277 residues: Urease accessory protein UreD (277 aa).

This sequence belongs to the UreD family. In terms of assembly, ureD, UreF and UreG form a complex that acts as a GTP-hydrolysis-dependent molecular chaperone, activating the urease apoprotein by helping to assemble the nickel containing metallocenter of UreC. The UreE protein probably delivers the nickel.

It localises to the cytoplasm. In terms of biological role, required for maturation of urease via the functional incorporation of the urease nickel metallocenter. The chain is Urease accessory protein UreD from Rhodopseudomonas palustris (strain BisB18).